The following is a 298-amino-acid chain: UDP-N-acetylenolpyruvoylglucosamine reductase (298 aa).

The 166-residue stretch at 26-191 folds into the FAD-binding PCMH-type domain; the sequence is KTGGEAEYLA…LSATFSLKPG (166 aa). The active site involves R170. Catalysis depends on S220, which acts as the Proton donor. E290 is an active-site residue.

The protein belongs to the MurB family. It depends on FAD as a cofactor.

The protein localises to the cytoplasm. It carries out the reaction UDP-N-acetyl-alpha-D-muramate + NADP(+) = UDP-N-acetyl-3-O-(1-carboxyvinyl)-alpha-D-glucosamine + NADPH + H(+). It functions in the pathway cell wall biogenesis; peptidoglycan biosynthesis. Functionally, cell wall formation. This is UDP-N-acetylenolpyruvoylglucosamine reductase from Lactobacillus acidophilus (strain ATCC 700396 / NCK56 / N2 / NCFM).